We begin with the raw amino-acid sequence, 365 residues long: Homeobox protein Nkx-6.1 (365 aa).

A disordered region spans residues 35–136 (LYPAAYPPLP…SSSSASATSA (102 aa)). Composition is skewed to low complexity over residues 48–59 (PSSSSSSSSSSS), 69–92 (PGGL…QLSA), and 110–136 (ASGA…ATSA). The repressor domain stretch occupies residues 102–269 (LSRPSMPVAS…KYLAGPERAR (168 aa)). R190 is subject to Asymmetric dimethylarginine. The segment at residues 237 to 296 (RKHTRPTFSGQQIFALEKTFEQTKYLAGPERARLAYSLGMTESQVKVWFQNRRTKWRKKH) is a DNA-binding region (homeobox). The interval 295 to 365 (KHAAEMATAK…LHASEAEGSS (71 aa)) is disordered. The segment covering 305 to 318 (KKQDSETERLKGTS) has biased composition (basic and acidic residues). The tract at residues 307 to 365 (QDSETERLKGTSENEEDDDDYNKPLDPNSDDEKITQLLKKHKSSGGSLLLHASEAEGSS) is involved in DNA-binding.

Pancreatic beta cells.

Its subcellular location is the nucleus. Its function is as follows. Transcription factor which binds to specific A/T-rich DNA sequences in the promoter regions of a number of genes. Involved in the development of insulin-producing beta cells in the islets of Langerhans at the secondary transition. Together with NKX2-2 and IRX3 acts to restrict the generation of motor neurons to the appropriate region of the neural tube. Belongs to the class II proteins of neuronal progenitor factors, which are induced by SHH signals. The sequence is that of Homeobox protein Nkx-6.1 (Nkx6-1) from Rattus norvegicus (Rat).